Consider the following 219-residue polypeptide: Rho-related protein racN (219 aa).

12 to 19 (GDVTIGKT) is a binding site for GTP. Positions 33–41 (YIPTIFDNH) match the Effector region motif. Residues 58 to 62 (DTGGG) and 114 to 117 (TKTD) contribute to the GTP site. Cys216 is modified (cysteine methyl ester). Cys216 carries S-geranylgeranyl cysteine lipidation. A propeptide spans 217-219 (IIC) (removed in mature form).

This sequence belongs to the small GTPase superfamily. Rho family.

The protein localises to the cell membrane. This is Rho-related protein racN (racN) from Dictyostelium discoideum (Social amoeba).